A 346-amino-acid chain; its full sequence is Phosphoribosylformylglycinamidine cyclo-ligase (346 aa).

It belongs to the AIR synthase family.

Its subcellular location is the cytoplasm. The enzyme catalyses 2-formamido-N(1)-(5-O-phospho-beta-D-ribosyl)acetamidine + ATP = 5-amino-1-(5-phospho-beta-D-ribosyl)imidazole + ADP + phosphate + H(+). The protein operates within purine metabolism; IMP biosynthesis via de novo pathway; 5-amino-1-(5-phospho-D-ribosyl)imidazole from N(2)-formyl-N(1)-(5-phospho-D-ribosyl)glycinamide: step 2/2. The sequence is that of Phosphoribosylformylglycinamidine cyclo-ligase from Bacillus velezensis (strain DSM 23117 / BGSC 10A6 / LMG 26770 / FZB42) (Bacillus amyloliquefaciens subsp. plantarum).